Here is a 204-residue protein sequence, read N- to C-terminus: Thymidylate kinase (204 aa).

Position 9-16 (Gly9–Ser16) interacts with ATP.

Belongs to the thymidylate kinase family.

The enzyme catalyses dTMP + ATP = dTDP + ADP. Phosphorylation of dTMP to form dTDP in both de novo and salvage pathways of dTTP synthesis. The sequence is that of Thymidylate kinase from Francisella philomiragia subsp. philomiragia (strain ATCC 25017 / CCUG 19701 / FSC 153 / O#319-036).